The following is a 294-amino-acid chain: Homoserine kinase (294 aa).

An ATP-binding site is contributed by 83–93 (PLARGLGSSAS).

Belongs to the GHMP kinase family. Homoserine kinase subfamily.

Its subcellular location is the cytoplasm. It catalyses the reaction L-homoserine + ATP = O-phospho-L-homoserine + ADP + H(+). It participates in amino-acid biosynthesis; L-threonine biosynthesis; L-threonine from L-aspartate: step 4/5. Its function is as follows. Catalyzes the ATP-dependent phosphorylation of L-homoserine to L-homoserine phosphate. This is Homoserine kinase from Oceanobacillus iheyensis (strain DSM 14371 / CIP 107618 / JCM 11309 / KCTC 3954 / HTE831).